A 401-amino-acid chain; its full sequence is S-adenosylmethionine synthase (401 aa).

Position 15 (His-15) interacts with ATP. Position 17 (Asp-17) interacts with Mg(2+). Residue Glu-43 participates in K(+) binding. Residues Glu-56 and Gln-99 each coordinate L-methionine. The interval 99-109 (QSPEIGAGVDT) is flexible loop. The interval 101 to 132 (PEIGAGVDTSHEVRGSSSTDEDDRQGAGDQGL) is disordered. ATP is bound by residues 174–176 (DGK), Asp-254, 260–261 (RK), Ala-277, and Lys-281. Asp-254 contributes to the L-methionine binding site. Lys-285 contacts L-methionine.

It belongs to the AdoMet synthase family. In terms of assembly, homotetramer; dimer of dimers. It depends on Mg(2+) as a cofactor. K(+) serves as cofactor.

The protein resides in the cytoplasm. It carries out the reaction L-methionine + ATP + H2O = S-adenosyl-L-methionine + phosphate + diphosphate. It functions in the pathway amino-acid biosynthesis; S-adenosyl-L-methionine biosynthesis; S-adenosyl-L-methionine from L-methionine: step 1/1. In terms of biological role, catalyzes the formation of S-adenosylmethionine (AdoMet) from methionine and ATP. The overall synthetic reaction is composed of two sequential steps, AdoMet formation and the subsequent tripolyphosphate hydrolysis which occurs prior to release of AdoMet from the enzyme. The polypeptide is S-adenosylmethionine synthase (Corynebacterium urealyticum (strain ATCC 43042 / DSM 7109)).